We begin with the raw amino-acid sequence, 175 residues long: 6,7-dimethyl-8-ribityllumazine synthase (175 aa).

5-amino-6-(D-ribitylamino)uracil-binding positions include Phe-24, 58-60 (ALE), and 82-84 (AVI). Residue 87-88 (ET) coordinates (2S)-2-hydroxy-3-oxobutyl phosphate. His-90 (proton donor) is an active-site residue. Residue Asn-115 participates in 5-amino-6-(D-ribitylamino)uracil binding. Arg-129 is a (2S)-2-hydroxy-3-oxobutyl phosphate binding site. The disordered stretch occupies residues 151–175 (LEPEEDDEDEDEEDEDFDDEETDRR). The span at 152–175 (EPEEDDEDEDEEDEDFDDEETDRR) shows a compositional bias: acidic residues.

This sequence belongs to the DMRL synthase family.

It carries out the reaction (2S)-2-hydroxy-3-oxobutyl phosphate + 5-amino-6-(D-ribitylamino)uracil = 6,7-dimethyl-8-(1-D-ribityl)lumazine + phosphate + 2 H2O + H(+). It functions in the pathway cofactor biosynthesis; riboflavin biosynthesis; riboflavin from 2-hydroxy-3-oxobutyl phosphate and 5-amino-6-(D-ribitylamino)uracil: step 1/2. In terms of biological role, catalyzes the formation of 6,7-dimethyl-8-ribityllumazine by condensation of 5-amino-6-(D-ribitylamino)uracil with 3,4-dihydroxy-2-butanone 4-phosphate. This is the penultimate step in the biosynthesis of riboflavin. The chain is 6,7-dimethyl-8-ribityllumazine synthase from Bordetella petrii (strain ATCC BAA-461 / DSM 12804 / CCUG 43448).